A 112-amino-acid chain; its full sequence is ATP synthase epsilon chain (112 aa).

The protein belongs to the ATPase epsilon chain family. In terms of assembly, F-type ATPases have 2 components, CF(1) - the catalytic core - and CF(0) - the membrane proton channel. CF(1) has five subunits: alpha(3), beta(3), gamma(1), delta(1), epsilon(1). CF(0) has three main subunits: a, b and c.

It localises to the cell membrane. Functionally, produces ATP from ADP in the presence of a proton gradient across the membrane. This chain is ATP synthase epsilon chain, found in Rickettsia africae (strain ESF-5).